The sequence spans 356 residues: Thrombomodulin (356 aa).

The Extracellular portion of the chain corresponds to 1–296 (RGARGETEGR…SPAPAGPLHS (296 aa)). 2 EGF-like domains span residues 17–57 (GAWA…RSCG) and 60–98 (AEHP…HRCE). Disulfide bonds link C21–C32, C28–C41, C43–C56, C64–C72, C68–C82, C84–C97, C103–C114, C110–C123, C125–C136, C143–C152, C148–C162, C164–C178, C182–C191, C187–C199, C201–C213, C219–C228, C224–C237, and C239–C253. An EGF-like 3; calcium-binding domain is found at 99–137 (DVDDCAQLPSPCPQRCVNTEGGFQCHCDTGYELVDGECV). 2 consecutive EGF-like domains span residues 139 to 179 (PVDP…HKCQ) and 178 to 214 (CQMF…STCT). In terms of domain architecture, EGF-like 6; calcium-binding spans 215-254 (DINECDTNICPGQCHNLPGTYECICGPDSALSGQIGIDCD). Residues 255-290 (PTQVNEERGTPEDYGGSGEPPVSPTPGATARPSPAP) form a disordered region. S271 is a glycosylation site (O-linked (Xyl...) (chondroitin sulfate) serine). The chain crosses the membrane as a helical span at residues 297 to 320 (GVLVGISIASLSLVVALLALLCHL). At 321–356 (RKKQGASRGELEYKCGVPAKELMLQQVKTERTPQKL) the chain is on the cytoplasmic side.

In terms of assembly, interacts with ITGAL, ITGAM and ITGB2. Interacts with thrombin/F2; this interaction switches the specificity of thrombin from a procoagulant to an anticoagulant and antifibrinolytic protease. Interacts with ANGP1 and ANGP2; these interactions significantly inhibit the generation of activated PC and TAFIa/CPB2 by the thrombin/thrombomodulin complex. Interacts with PF4; this interaction enhances generation of activated protein C. Interacts with HMGB1; this interaction inhibits HMGB1 inflammatory activity. In terms of tissue distribution, endothelial cells are unique in synthesizing thrombomodulin.

It is found in the membrane. Functionally, endothelial cell receptor that plays a critical role in regulating several physiological processes including hemostasis, coagulation, fibrinolysis, inflammation, and angiogenesis. Acts as a cofactor for thrombin activation of protein C/PROC on the surface of vascular endothelial cells leading to initiation of the activated protein C anticoagulant pathway. Also accelerates the activation of the plasma carboxypeptidase B2/CPB2, which catalyzes removal of C-terminal basic amino acids from its substrates including kinins or anaphylatoxins leading to fibrinolysis inhibition. Plays critical protective roles in changing the cleavage specificity of protease-activated receptor 1/PAR1, inhibiting endothelial cell permeability and inflammation. Suppresses inflammation distinctly from its anticoagulant cofactor activity by sequestering HMGB1 thereby preventing it from engaging cellular receptors such as RAGE and contributing to the inflammatory response. In Bos taurus (Bovine), this protein is Thrombomodulin (THBD).